Here is a 492-residue protein sequence, read N- to C-terminus: Trehalose-6-phosphate synthase (492 aa).

Arg-25 lines the D-glucose 6-phosphate pocket. Gly-45–Gly-46 is a UDP-alpha-D-glucose binding site. D-glucose 6-phosphate is bound by residues Tyr-101 and Asp-155. Residues Arg-297 and Lys-302 each contribute to the UDP-alpha-D-glucose site. Position 335 (Arg-335) interacts with D-glucose 6-phosphate. Leu-400 to Glu-404 serves as a coordination point for UDP-alpha-D-glucose.

Belongs to the glycosyltransferase 20 family. In terms of assembly, homotetramer.

It carries out the reaction ADP-alpha-D-glucose + D-glucose 6-phosphate = alpha,alpha-trehalose 6-phosphate + ADP + H(+). The catalysed reaction is CDP-alpha-D-glucose + D-glucose 6-phosphate = alpha,alpha-trehalose 6-phosphate + CDP + H(+). It catalyses the reaction GDP-alpha-D-glucose + D-glucose 6-phosphate = alpha,alpha-trehalose 6-phosphate + GDP + H(+). The enzyme catalyses TDP-alpha-D-glucose + D-glucose 6-phosphate = 5-methyl-UDP + alpha,alpha-trehalose 6-phosphate + H(+). It carries out the reaction D-glucose 6-phosphate + UDP-alpha-D-glucose = alpha,alpha-trehalose 6-phosphate + UDP + H(+). It functions in the pathway glycan biosynthesis; trehalose biosynthesis. Probably involved in the osmoprotection via the biosynthesis of trehalose and in the production of glycogen and alpha-glucan via the TreS-Pep2 branch involved in the biosynthesis of maltose-1-phosphate (M1P). Catalyzes the transfer of glucose from UDP-glucose (UDP-Glc) to D-glucose 6-phosphate (Glc-6-P) to form trehalose-6-phosphate. Probably also able to use ADP-Glc, CDP-Glc, GDP-Glc and TDP-Glc as glucosyl donors. The protein is Trehalose-6-phosphate synthase of Mycolicibacterium paratuberculosis (strain ATCC BAA-968 / K-10) (Mycobacterium paratuberculosis).